The following is a 132-amino-acid chain: Small ribosomal subunit protein uS8 (132 aa).

Belongs to the universal ribosomal protein uS8 family. As to quaternary structure, part of the 30S ribosomal subunit. Contacts proteins S5 and S12.

One of the primary rRNA binding proteins, it binds directly to 16S rRNA central domain where it helps coordinate assembly of the platform of the 30S subunit. In Francisella tularensis subsp. novicida (strain U112), this protein is Small ribosomal subunit protein uS8.